A 275-amino-acid chain; its full sequence is 2-dehydro-3-deoxyphosphooctonate aldolase (275 aa).

This sequence belongs to the KdsA family.

Its subcellular location is the cytoplasm. The enzyme catalyses D-arabinose 5-phosphate + phosphoenolpyruvate + H2O = 3-deoxy-alpha-D-manno-2-octulosonate-8-phosphate + phosphate. Its pathway is carbohydrate biosynthesis; 3-deoxy-D-manno-octulosonate biosynthesis; 3-deoxy-D-manno-octulosonate from D-ribulose 5-phosphate: step 2/3. The protein operates within bacterial outer membrane biogenesis; lipopolysaccharide biosynthesis. The chain is 2-dehydro-3-deoxyphosphooctonate aldolase from Francisella philomiragia subsp. philomiragia (strain ATCC 25017 / CCUG 19701 / FSC 153 / O#319-036).